The primary structure comprises 252 residues: Probable transcriptional regulatory protein A1E_02520 (252 aa).

The protein belongs to the TACO1 family.

The protein resides in the cytoplasm. The protein is Probable transcriptional regulatory protein A1E_02520 of Rickettsia canadensis (strain McKiel).